A 371-amino-acid chain; its full sequence is Queuine tRNA-ribosyltransferase (371 aa).

The Proton acceptor role is filled by Asp90. Substrate-binding positions include 90–94 (DSGGF), Asp144, Gln188, and Gly215. Positions 246 to 252 (GVGTPED) are RNA binding. Asp265 serves as the catalytic Nucleophile. Positions 270–274 (TRNAR) are RNA binding; important for wobble base 34 recognition. Positions 303, 305, 308, and 334 each coordinate Zn(2+).

Belongs to the queuine tRNA-ribosyltransferase family. As to quaternary structure, homodimer. Within each dimer, one monomer is responsible for RNA recognition and catalysis, while the other monomer binds to the replacement base PreQ1. Zn(2+) serves as cofactor.

The enzyme catalyses 7-aminomethyl-7-carbaguanine + guanosine(34) in tRNA = 7-aminomethyl-7-carbaguanosine(34) in tRNA + guanine. Its pathway is tRNA modification; tRNA-queuosine biosynthesis. In terms of biological role, catalyzes the base-exchange of a guanine (G) residue with the queuine precursor 7-aminomethyl-7-deazaguanine (PreQ1) at position 34 (anticodon wobble position) in tRNAs with GU(N) anticodons (tRNA-Asp, -Asn, -His and -Tyr). Catalysis occurs through a double-displacement mechanism. The nucleophile active site attacks the C1' of nucleotide 34 to detach the guanine base from the RNA, forming a covalent enzyme-RNA intermediate. The proton acceptor active site deprotonates the incoming PreQ1, allowing a nucleophilic attack on the C1' of the ribose to form the product. After dissociation, two additional enzymatic reactions on the tRNA convert PreQ1 to queuine (Q), resulting in the hypermodified nucleoside queuosine (7-(((4,5-cis-dihydroxy-2-cyclopenten-1-yl)amino)methyl)-7-deazaguanosine). The sequence is that of Queuine tRNA-ribosyltransferase from Neisseria gonorrhoeae (strain ATCC 700825 / FA 1090).